We begin with the raw amino-acid sequence, 937 residues long: Isoleucine--tRNA ligase (937 aa).

The short motif at 58 to 68 is the 'HIGH' region element; sequence PYANGNIHIGH. Glu-560 contributes to the L-isoleucyl-5'-AMP binding site. The short motif at 601–605 is the 'KMSKS' region element; the sequence is KMSKS. Lys-604 lines the ATP pocket. Residues Cys-900, Cys-903, Cys-920, and Cys-923 each contribute to the Zn(2+) site.

This sequence belongs to the class-I aminoacyl-tRNA synthetase family. IleS type 1 subfamily. In terms of assembly, monomer. It depends on Zn(2+) as a cofactor.

The protein resides in the cytoplasm. The enzyme catalyses tRNA(Ile) + L-isoleucine + ATP = L-isoleucyl-tRNA(Ile) + AMP + diphosphate. In terms of biological role, catalyzes the attachment of isoleucine to tRNA(Ile). As IleRS can inadvertently accommodate and process structurally similar amino acids such as valine, to avoid such errors it has two additional distinct tRNA(Ile)-dependent editing activities. One activity is designated as 'pretransfer' editing and involves the hydrolysis of activated Val-AMP. The other activity is designated 'posttransfer' editing and involves deacylation of mischarged Val-tRNA(Ile). This Thioalkalivibrio sulfidiphilus (strain HL-EbGR7) protein is Isoleucine--tRNA ligase.